The following is a 142-amino-acid chain: Cytidine deaminase (142 aa).

The 131-residue stretch at 9 to 139 (RQLEALKRAA…ELLPMAFGPS (131 aa)) folds into the CMP/dCMP-type deaminase domain. A substrate-binding site is contributed by 50–52 (NVE). Cysteine 61 serves as a coordination point for Zn(2+). Glutamate 63 acts as the Proton donor in catalysis. Cysteine 96 and cysteine 99 together coordinate Zn(2+).

Belongs to the cytidine and deoxycytidylate deaminase family. As to quaternary structure, homodimer. It depends on Zn(2+) as a cofactor.

It catalyses the reaction cytidine + H2O + H(+) = uridine + NH4(+). The catalysed reaction is 2'-deoxycytidine + H2O + H(+) = 2'-deoxyuridine + NH4(+). Functionally, this enzyme scavenges exogenous and endogenous cytidine and 2'-deoxycytidine for UMP synthesis. This Saccharomyces cerevisiae (strain ATCC 204508 / S288c) (Baker's yeast) protein is Cytidine deaminase (CDD1).